The chain runs to 294 residues: Elongation factor Ts (294 aa).

Residues 81–84 (TDFV) form an involved in Mg(2+) ion dislocation from EF-Tu region.

This sequence belongs to the EF-Ts family.

It is found in the cytoplasm. Functionally, associates with the EF-Tu.GDP complex and induces the exchange of GDP to GTP. It remains bound to the aminoacyl-tRNA.EF-Tu.GTP complex up to the GTP hydrolysis stage on the ribosome. The protein is Elongation factor Ts (tsf) of Mycoplasmopsis pulmonis (strain UAB CTIP) (Mycoplasma pulmonis).